The chain runs to 33 residues: Mu-theraphotoxin-Ssp1a (33 aa).

Cystine bridges form between Cys-2–Cys-17, Cys-9–Cys-22, and Cys-16–Cys-29. Residue Leu-33 is modified to Leucine amide.

It belongs to the neurotoxin 10 (Hwtx-1) family. 22 (Htx-4) subfamily. Expressed by the venom gland.

The protein resides in the secreted. Functionally, gating modifier toxin that traps voltage-sensing domain II of voltage-gated sodium channels in the resting state without significantly altering the voltage-dependence of activation and inactivation, or delay in recovery from inactivation. Inhibits hNav1.7/SCN9A (IC(50)=134 nM), followed in rank order of potency by Nav1.6/SCN8A (IC(50)=191 nM), Nav1.2/SCN2A (IC(50)=239 nM), Nav1.3/SCN3A (IC(50)=547 nM) and Nav1.1/SCN1A (IC(50)=674 nM). Its binding to Nav1.2, Nav1.3 and Nav1.7 is slowly reversible and incomplete, with ~25% of Nav1.2, ~50% of Nav1.3 and ~40% of Nav1.7 channels recovering from block after a 30 minutes washout, respectively. Binds in the aqueous cleft formed between the S1-S2 and S3-S4 loops of each channel subtype, primarily targeting the S3-S4 loop. The chain is Mu-theraphotoxin-Ssp1a from Selenotypus sp. (Feather-legged tarantula).